A 152-amino-acid chain; its full sequence is Transcriptional regulator MraZ (152 aa).

SpoVT-AbrB domains lie at 5–52 (ASAI…PADE) and 81–124 (AHEI…DEAQ).

The protein belongs to the MraZ family. Forms oligomers.

It localises to the cytoplasm. It is found in the nucleoid. This chain is Transcriptional regulator MraZ, found in Shewanella amazonensis (strain ATCC BAA-1098 / SB2B).